A 373-amino-acid chain; its full sequence is MWPPSRRQLCLAFLLVCALSAFSFLLHLHQDLFRNGLALSLPCLERQPVPAPVAIVCLPVTSPASNASSCAGRPAAPSGIWTIHPDGRFGNQMGQYATLLALAQLNGRRAFILPAMHAALAPVFRITLPVLAPEVNRRTSWKQLLLHDWMSEEYSRLEDPFLKFTGFPCSWTFFHHVREQIRREFTLHDHLREEAQRLLGKLRLGRTGARPRTFVGVHVRRGDYLQVMPQRWKGVVGDRAYLQQAMDWFRARHEAPIFVVTSNGMKWCWENIDASRGDVVFAGNGLESSPAKDFALLTQCNHTVMTIGTFGFWAAYLAGGDTVYLANFTLPDSEFLKIFKPEAAFLPEWVGINADLSPVRTLSGSWRPWRFLG.

At 1-12 (MWPPSRRQLCLA) the chain is on the cytoplasmic side. Residues 13–29 (FLLVCALSAFSFLLHLH) traverse the membrane as a helical; Signal-anchor for type II membrane protein segment. The Lumenal segment spans residues 30 to 373 (QDLFRNGLAL…GSWRPWRFLG (344 aa)). N-linked (GlcNAc...) asparagine glycans are attached at residues N66, N301, and N327.

Belongs to the glycosyltransferase 11 family. As to expression, brain.

Its subcellular location is the golgi apparatus. It localises to the golgi stack membrane. It catalyses the reaction a beta-D-galactosyl-(1-&gt;4)-N-acetyl-beta-D-glucosaminyl derivative + GDP-beta-L-fucose = an alpha-L-Fuc-(1-&gt;2)-beta-D-Gal-(1-&gt;4)-beta-D-GlcNAc derivative + GDP + H(+). The catalysed reaction is a ganglioside GA1 + GDP-beta-L-fucose = a ganglioside Fuc-GA1 + GDP + H(+). It carries out the reaction a beta-D-Gal-(1-&gt;3)-beta-D-GlcNAc-(1-&gt;3)-beta-D-Gal-(1-&gt;4)-beta-D-Glc-(1&lt;-&gt;1')-Cer(d18:1(4E)) + GDP-beta-L-fucose = alpha-L-fucosyl-(1-&gt;2)- beta-D-galactosyl-(1-&gt;3)-N-acetyl-beta-D-glucosaminyl-(1-&gt;3)-beta-D-galactosyl-(1-&gt;4)-beta-D-glucosyl-(1&lt;-&gt;1')-N-acylsphing-4-enine + GDP + H(+). The enzyme catalyses a neolactoside nLc4Cer(d18:1(4E)) + GDP-beta-L-fucose = a neolactoside IV(2)-alpha-Fuc-nLc4Cer(d18:1(4E)) + GDP + H(+). It catalyses the reaction a ganglioside GM1 + GDP-beta-L-fucose = a ganglioside Fuc-GM1 + GDP + H(+). The catalysed reaction is beta-D-galactosyl-(1-&gt;3)-N-acetyl-D-galactosamine + GDP-beta-L-fucose = alpha-L-fucosyl-(1-&gt;2)-beta-D-galactosyl-(1-&gt;3)-N-acetyl-D-galactosamine + GDP + H(+). The protein operates within protein modification; protein glycosylation. Its function is as follows. Catalyzes the transfer of L-fucose, from a guanosine diphosphate-beta-L-fucose, to the terminal galactose residue of glycoconjugates through an alpha(1,2) linkage leading to H antigen synthesis that is an intermediate substrate in the synthesis of ABO blood group antigens. H antigen is essential for maturation of the glomerular layer of the main olfactory bulb, in cell migration and early cell-cell contacts during tumor associated angiogenesis. Preferentially fucosylates soluble lactose and to a lesser extent fucosylates glycolipids gangliosides GA1 and GM1a. The chain is Galactoside alpha-(1,2)-fucosyltransferase 1 from Oryctolagus cuniculus (Rabbit).